The sequence spans 147 residues: Large ribosomal subunit protein uL11 (147 aa).

This sequence belongs to the universal ribosomal protein uL11 family. As to quaternary structure, part of the ribosomal stalk of the 50S ribosomal subunit. Interacts with L10 and the large rRNA to form the base of the stalk. L10 forms an elongated spine to which L12 dimers bind in a sequential fashion forming a multimeric L10(L12)X complex. In terms of processing, one or more lysine residues are methylated.

Its function is as follows. Forms part of the ribosomal stalk which helps the ribosome interact with GTP-bound translation factors. This Thermus thermophilus (strain ATCC BAA-163 / DSM 7039 / HB27) protein is Large ribosomal subunit protein uL11.